A 484-amino-acid chain; its full sequence is MEAACLVRSLGLPQGEEALKARLRRPGHPRLREALAAYLKRLQAPEEAFRALERLEVGAVVTGQQAGLLGGPALTFYKAHTALCLADRAGAAGVFWVASQDHDVEEVRHLHLLRDEVPETLSLDLPPLPSGRIPLAPHRERLRAFLGPWAKDYRLGYALEAETLSEFFARVLLAFLGERGLVPFDPMAEELAPLFLEALERELSDPLGSAEAINREAERIRALGGKPPLRRKPGATNLFLETDQRRLLFYEGGAFTDGVRRYTAKELWEIARADPSRLTPAAGLRPVFQDLVLPTAGFVVGPNELRYVAELSGVYARYGLAMPALFLRAFGVVVEPPVRRILEKYRLDPWAFVDEGEAAFLRAAEAWLAPFRAFRDRVEGLLQEASRLVEEAEALEPNLVRPLRRFRARVGGEAERLRRKLLAAQAARDEVLARHLGRLKVHLLPFGLPQERVYPYAMYALRHGEALRRLAEAPWEGRVALYLG.

A coiled-coil region spans residues 372-435; the sequence is RAFRDRVEGL…AARDEVLARH (64 aa).

The protein belongs to the BshC family.

This is Putative cysteine ligase BshC from Thermus thermophilus (strain ATCC 27634 / DSM 579 / HB8).